Here is a 364-residue protein sequence, read N- to C-terminus: Aminomethyltransferase (364 aa).

This sequence belongs to the GcvT family. As to quaternary structure, the glycine cleavage system is composed of four proteins: P, T, L and H.

It catalyses the reaction N(6)-[(R)-S(8)-aminomethyldihydrolipoyl]-L-lysyl-[protein] + (6S)-5,6,7,8-tetrahydrofolate = N(6)-[(R)-dihydrolipoyl]-L-lysyl-[protein] + (6R)-5,10-methylene-5,6,7,8-tetrahydrofolate + NH4(+). The glycine cleavage system catalyzes the degradation of glycine. This chain is Aminomethyltransferase, found in Shigella flexneri serotype 5b (strain 8401).